We begin with the raw amino-acid sequence, 473 residues long: Arginine biosynthesis bifunctional protein ArgJ, mitochondrial (473 aa).

Substrate is bound by residues T201, K230, T241, E328, N468, and T473. The Nucleophile role is filled by T241.

The protein belongs to the ArgJ family. As to quaternary structure, heterodimer of an alpha and a beta chain. Post-translationally, the alpha and beta chains are autoproteolytically processed from a single precursor protein within the mitochondrion.

It is found in the mitochondrion matrix. It carries out the reaction N(2)-acetyl-L-ornithine + L-glutamate = N-acetyl-L-glutamate + L-ornithine. The enzyme catalyses L-glutamate + acetyl-CoA = N-acetyl-L-glutamate + CoA + H(+). The protein operates within amino-acid biosynthesis; L-arginine biosynthesis; L-ornithine and N-acetyl-L-glutamate from L-glutamate and N(2)-acetyl-L-ornithine (cyclic): step 1/1. It functions in the pathway amino-acid biosynthesis; L-arginine biosynthesis; N(2)-acetyl-L-ornithine from L-glutamate: step 1/4. In terms of biological role, catalyzes two activities which are involved in the cyclic version of arginine biosynthesis: the synthesis of acetylglutamate from glutamate and acetyl-CoA, and of ornithine by transacetylation between acetylornithine and glutamate. The polypeptide is Arginine biosynthesis bifunctional protein ArgJ, mitochondrial (Blastomyces gilchristii (strain SLH14081) (Blastomyces dermatitidis)).